The primary structure comprises 555 residues: Potassium-transporting ATPase potassium-binding subunit (555 aa).

A run of 10 helical transmembrane segments spans residues 2-22 (IWVAVVITMLLFILVAKPTGI), 60-80 (QYALSLVLLNGFMIVVVYFIF), 130-150 (IGITFLMFAAPATTLALVMAF), 173-193 (VFLPIAFMAALVFVALGVPQT), 246-266 (MSNILQMMLMMLLPTALPFTY), 278-298 (ILFVSLFMVFLLGFITITTSE), 374-394 (AGFVNIIMYAIIAVFISGLMV), 412-432 (LIAVTILFHPLLILGFSALAL), 483-503 (LVMFLGRYFSLITMLAVAASL), and 525-545 (GIFIGTIVIVGALTFFPMLVL).

It belongs to the KdpA family. The system is composed of three essential subunits: KdpA, KdpB and KdpC.

The protein localises to the cell membrane. In terms of biological role, part of the high-affinity ATP-driven potassium transport (or Kdp) system, which catalyzes the hydrolysis of ATP coupled with the electrogenic transport of potassium into the cytoplasm. This subunit binds the extracellular potassium ions and delivers the ions to the membrane domain of KdpB through an intramembrane tunnel. This Bacillus anthracis (strain A0248) protein is Potassium-transporting ATPase potassium-binding subunit.